A 208-amino-acid chain; its full sequence is Putative ankyrin repeat protein Ta0196 (208 aa).

ANK repeat units lie at residues 49–78 (YQRN…HIDD), 82–111 (EGNT…SIDI), 115–144 (AGNT…NINI), and 148–177 (EGDT…DLNA).

The polypeptide is Putative ankyrin repeat protein Ta0196 (Thermoplasma acidophilum (strain ATCC 25905 / DSM 1728 / JCM 9062 / NBRC 15155 / AMRC-C165)).